The primary structure comprises 156 residues: Guanine deaminase (156 aa).

In terms of domain architecture, CMP/dCMP-type deaminase spans 1-132 (MNHETFLKRA…KPAEERTIPF (132 aa)). His53 is a Zn(2+) binding site. Glu55 functions as the Proton donor in the catalytic mechanism. 2 residues coordinate Zn(2+): Cys83 and Cys86.

Belongs to the cytidine and deoxycytidylate deaminase family. Zn(2+) is required as a cofactor.

The catalysed reaction is guanine + H2O + H(+) = xanthine + NH4(+). It participates in purine metabolism; guanine degradation; xanthine from guanine: step 1/1. Catalyzes the hydrolytic deamination of guanine, producing xanthine and ammonia. The sequence is that of Guanine deaminase (guaD) from Bacillus subtilis (strain 168).